The primary structure comprises 484 residues: Replication-associated protein (484 aa).

Residues 146-153 (IRKYHQSV) carry the Nuclear localization signal motif.

Its subcellular location is the host nucleus. Its function is as follows. Plays an essential for the replication of viral DNA. Presumably cleaves viral genomic dsRNA replicative form to initiate rolling circle replication. In Chaetoceros (Chaetoceros sp. DNA virus 7), this protein is Replication-associated protein.